The following is a 150-amino-acid chain: Large ribosomal subunit protein uL15 (150 aa).

Residues 1-51 (MKLHTLRPAKGSVKTSKRIGRGTGSGRGGTSTKGHKGAKSRSGYSSKIGFE) form a disordered region. Positions 21–31 (RGTGSGRGGTS) are enriched in gly residues.

Belongs to the universal ribosomal protein uL15 family. In terms of assembly, part of the 50S ribosomal subunit.

Binds to the 23S rRNA. This Cytophaga hutchinsonii (strain ATCC 33406 / DSM 1761 / CIP 103989 / NBRC 15051 / NCIMB 9469 / D465) protein is Large ribosomal subunit protein uL15.